A 236-amino-acid polypeptide reads, in one-letter code: Flagellar L-ring protein (236 aa).

The N-terminal stretch at methionine 1–glycine 16 is a signal peptide. A lipid anchor (N-palmitoyl cysteine) is attached at cysteine 17. Residue cysteine 17 is the site of S-diacylglycerol cysteine attachment. The disordered stretch occupies residues glutamate 96–glutamate 143. Residues asparagine 105–phenylalanine 122 are compositionally biased toward polar residues.

Belongs to the FlgH family. As to quaternary structure, the basal body constitutes a major portion of the flagellar organelle and consists of four rings (L,P,S, and M) mounted on a central rod.

The protein resides in the cell outer membrane. It is found in the bacterial flagellum basal body. Its function is as follows. Assembles around the rod to form the L-ring and probably protects the motor/basal body from shearing forces during rotation. The protein is Flagellar L-ring protein of Sinorhizobium medicae (strain WSM419) (Ensifer medicae).